The chain runs to 104 residues: Large ribosomal subunit protein uL24 (104 aa).

Belongs to the universal ribosomal protein uL24 family. In terms of assembly, part of the 50S ribosomal subunit.

Its function is as follows. One of two assembly initiator proteins, it binds directly to the 5'-end of the 23S rRNA, where it nucleates assembly of the 50S subunit. Functionally, one of the proteins that surrounds the polypeptide exit tunnel on the outside of the subunit. The chain is Large ribosomal subunit protein uL24 from Klebsiella pneumoniae (strain 342).